The primary structure comprises 422 residues: Acylglycerol kinase, mitochondrial (422 aa).

N6-acetyllysine is present on K6. The segment at 15 to 31 is hydrophobic; the sequence is TTAGLCLLTWGGHWLYG. The region spanning 58–199 is the DAGKc domain; it reads AQVKKATVFL…LDVLQIKGEK (142 aa). Positions 249–271 are disordered; it reads QASISYTGPTERPPSEPEETPVQ.

It belongs to the AGK family. In terms of assembly, component of the TIM22 complex, which core is composed of TIMM22, associated with TIMM10 (TIMM10A and/or TIMM10B), TIMM9, AGK and TIMM29. Interacts with SMIM26. Mg(2+) serves as cofactor.

The protein localises to the mitochondrion inner membrane. The protein resides in the mitochondrion intermembrane space. The catalysed reaction is a monoacylglycerol + ATP = a monoacyl-sn-glycero-3-phosphate + ADP + H(+). The enzyme catalyses a 1,2-diacyl-sn-glycerol + ATP = a 1,2-diacyl-sn-glycero-3-phosphate + ADP + H(+). It catalyses the reaction an N-acylsphing-4-enine + ATP = an N-acylsphing-4-enine 1-phosphate + ADP + H(+). It carries out the reaction 1-(9Z-octadecenoyl)-sn-glycerol + ATP = 1-(9Z-octadecenoyl)-sn-glycero-3-phosphate + ADP + H(+). The catalysed reaction is 1,2-di-(9Z-octadecenoyl)-sn-glycerol + ATP = 1,2-di-(9Z-octadecenoyl)-sn-glycero-3-phosphate + ADP + H(+). The enzyme catalyses a 1-acyl-sn-glycerol + ATP = a 1-acyl-sn-glycero-3-phosphate + ADP + H(+). It catalyses the reaction 1-hexadecanoyl-sn-glycerol + ATP = 1-hexadecanoyl-sn-glycero-3-phosphate + ADP + H(+). It carries out the reaction a 2-acylglycerol + ATP = a 2-acyl-sn-glycerol 3-phosphate + ADP + H(+). The catalysed reaction is 2-(5Z,8Z,11Z,14Z-eicosatetraenoyl)-glycerol + ATP = 2-(5Z,8Z,11Z,14Z-eicosatetraenoyl)-sn-glycero-3-phosphate + ADP + H(+). The enzyme catalyses 1-(5Z,8Z,11Z,14Z-eicosatetraenoyl)-sn-glycerol + ATP = 1-(5Z,8Z,11Z,14Z-eicosatetraenoyl)-sn-glycero-3-phosphate + ADP + H(+). It catalyses the reaction N-(hexanoyl)sphing-4-enine + ATP = N-hexanoylsphing-4-enine 1-phosphate + ADP + H(+). Its pathway is lipid metabolism; glycerolipid metabolism. Functionally, lipid kinase that can phosphorylate both monoacylglycerol and diacylglycerol to form lysophosphatidic acid (LPA) and phosphatidic acid (PA), respectively. Phosphorylates ceramide but not sphingosine. Phosphorylates 1,2-dioleoylglycerol more rapidly than 2,3-dioleoylglycerol. Independently of its lipid kinase activity, acts as a component of the TIM22 complex. The TIM22 complex mediates the import and insertion of multi-pass transmembrane proteins into the mitochondrial inner membrane by forming a twin-pore translocase that uses the membrane potential as the external driving force. In the TIM22 complex, required for the import of a subset of metabolite carriers into mitochondria, such as ANT1/SLC25A4 and SLC25A24, while it is not required for the import of TIMM23. Overexpression increases the formation and secretion of LPA, resulting in transactivation of EGFR and activation of the downstream MAPK signaling pathway, leading to increased cell growth. The chain is Acylglycerol kinase, mitochondrial from Pongo abelii (Sumatran orangutan).